Reading from the N-terminus, the 184-residue chain is Photosystem I assembly protein Ycf4 (184 aa).

Transmembrane regions (helical) follow at residues F22–S42 and I64–I84.

Belongs to the Ycf4 family.

Its subcellular location is the plastid. It is found in the chloroplast thylakoid membrane. Seems to be required for the assembly of the photosystem I complex. In Huperzia lucidula (Shining clubmoss), this protein is Photosystem I assembly protein Ycf4.